The following is a 178-amino-acid chain: Prion-like protein doppel (178 aa).

The first 25 residues, 1-25 (MRKHLGGCWLAIVCVLLFSQLSSVK), serve as a signal peptide directing secretion. Residues 27–50 (RGIKHRIKWNRKVLPSTSQVTEAH) are flexible tail. The interval 51 to 154 (TAEIRPGAFI…KHCDFWLERG (104 aa)) is globular. 2 cysteine pairs are disulfide-bonded: Cys94–Cys147 and Cys108–Cys142. 2 N-linked (GlcNAc...) asparagine glycosylation sites follow: Asn98 and Asn110. The segment at 124 to 141 (KQDNKLYQRVLWQLIREL) is cu(2+) binding. A lipid anchor (GPI-anchor amidated glycine) is attached at Gly154. Positions 155–178 (AGLQVTLDQPMMLCLLVFIWFIVK) are cleaved as a propeptide — removed in mature form.

This sequence belongs to the prion family. N-glycosylated. Post-translationally, O-glycosylated. In terms of tissue distribution, strongly expressed in testis. Detected at low levels in lymph node, spleen and ovary.

It localises to the cell membrane. Functionally, required for normal acrosome reaction and for normal male fertility. Can bind Cu(2+). The polypeptide is Prion-like protein doppel (PRND) (Ovis aries (Sheep)).